The chain runs to 210 residues: Thymidylate kinase (210 aa).

10–17 (GPEGAGKS) is a binding site for ATP.

It belongs to the thymidylate kinase family.

The catalysed reaction is dTMP + ATP = dTDP + ADP. Phosphorylation of dTMP to form dTDP in both de novo and salvage pathways of dTTP synthesis. The protein is Thymidylate kinase of Pseudomonas syringae pv. syringae (strain B728a).